The following is a 372-amino-acid chain: Dual-specificity RNA methyltransferase RlmN (372 aa).

Residue E97 is the Proton acceptor of the active site. The 238-residue stretch at 103–340 (ETDRKTLCVS…AVVRKNRGTD (238 aa)) folds into the Radical SAM core domain. C110 and C345 are disulfide-bonded. The [4Fe-4S] cluster site is built by C117, C121, and C124. S-adenosyl-L-methionine contacts are provided by residues 172-173 (GE), S204, 226-228 (SLN), and N302. The active-site S-methylcysteine intermediate is C345. Residues 350 to 372 (AEGGPGDPRRRAAAALTGTPAAG) form a disordered region. Low complexity predominate over residues 362–372 (AAALTGTPAAG).

It belongs to the radical SAM superfamily. RlmN family. The cofactor is [4Fe-4S] cluster.

It localises to the cytoplasm. It catalyses the reaction adenosine(2503) in 23S rRNA + 2 reduced [2Fe-2S]-[ferredoxin] + 2 S-adenosyl-L-methionine = 2-methyladenosine(2503) in 23S rRNA + 5'-deoxyadenosine + L-methionine + 2 oxidized [2Fe-2S]-[ferredoxin] + S-adenosyl-L-homocysteine. It carries out the reaction adenosine(37) in tRNA + 2 reduced [2Fe-2S]-[ferredoxin] + 2 S-adenosyl-L-methionine = 2-methyladenosine(37) in tRNA + 5'-deoxyadenosine + L-methionine + 2 oxidized [2Fe-2S]-[ferredoxin] + S-adenosyl-L-homocysteine. In terms of biological role, specifically methylates position 2 of adenine 2503 in 23S rRNA and position 2 of adenine 37 in tRNAs. m2A2503 modification seems to play a crucial role in the proofreading step occurring at the peptidyl transferase center and thus would serve to optimize ribosomal fidelity. In Anaeromyxobacter dehalogenans (strain 2CP-C), this protein is Dual-specificity RNA methyltransferase RlmN.